We begin with the raw amino-acid sequence, 1270 residues long: Myosin-1 (1270 aa).

The tract at residues 1 to 40 (MGHSRRPAGGEKKSRGFGRSKAAADVGDGRQAGKPQVKKA) is disordered. A Myosin motor domain is found at 50-729 (IGVSDLTLLS…TLFALETMRD (680 aa)). An ATP-binding site is contributed by 143-150 (GESGAGKT). S371 bears the Phosphoserine mark. The tract at residues 418-500 (SIGILDIYGF…PGVFAALNDA (83 aa)) is actin-binding. IQ domains follow at residues 733–753 (HNMAIRIQRAWRNYLRYRIEC) and 754–779 (AIRIQRFWRRMTGGLEFIKLRDQGHQ). Residues 787-980 (RRRMSLLGSR…TIHTSAGEPP (194 aa)) form the TH1 domain. Disordered stretches follow at residues 960–1102 (GASN…VLYD) and 1144–1270 (PEAY…DDEW). Residues 963–974 (NVDSYKSSTIHT) are compositionally biased toward polar residues. Positions 1023 to 1058 (ARQPMPQPTPQPAAVQPPPAPRPAVSPAAQPRPVPQ) are enriched in pro residues. Low complexity predominate over residues 1059 to 1078 (PVAAVAAAQHTRNASSSSTR). The span at 1079-1088 (APPPPPPATP) shows a compositional bias: pro residues. The region spanning 1092-1153 (QRKPMAKVLY…PEAYLEEQVA (62 aa)) is the SH3 domain. The span at 1157 to 1167 (KPAPPPPPPAA) shows a compositional bias: pro residues. Composition is skewed to low complexity over residues 1168 to 1186 (PRASPVPATNGAAAAVAAK) and 1238 to 1252 (NSASNASLAGGLAEA).

Belongs to the TRAFAC class myosin-kinesin ATPase superfamily. Myosin family. Post-translationally, phosphorylation of the TEDS site (Ser-371) is required for the polarization of the actin cytoskeleton. Phosphorylation probably activates the myosin-I ATPase activity.

The protein resides in the cytoplasm. It localises to the cytoskeleton. Its subcellular location is the actin patch. Its function is as follows. Type-I myosin implicated in the organization of the actin cytoskeleton. Required for proper actin cytoskeleton polarization. At the cell cortex, assembles in patch-like structures together with proteins from the actin-polymerizing machinery and promotes actin assembly. Functions as actin nucleation-promoting factor (NPF) for the Arp2/3 complex. Plays an important role in polarized growth, spore germination, hyphal morphogenesis, and septal wall formation. In Aspergillus niger (strain ATCC MYA-4892 / CBS 513.88 / FGSC A1513), this protein is Myosin-1 (myoA).